A 315-amino-acid chain; its full sequence is Ribosomal RNA small subunit methyltransferase H (315 aa).

S-adenosyl-L-methionine contacts are provided by residues 37-39 (AGH), D57, Y84, D105, and Q112.

The protein belongs to the methyltransferase superfamily. RsmH family.

The protein localises to the cytoplasm. The catalysed reaction is cytidine(1402) in 16S rRNA + S-adenosyl-L-methionine = N(4)-methylcytidine(1402) in 16S rRNA + S-adenosyl-L-homocysteine + H(+). Functionally, specifically methylates the N4 position of cytidine in position 1402 (C1402) of 16S rRNA. This Lachnospira eligens (strain ATCC 27750 / DSM 3376 / VPI C15-48 / C15-B4) (Eubacterium eligens) protein is Ribosomal RNA small subunit methyltransferase H.